Consider the following 365-residue polypeptide: MSLQSIKYNRGSLEILDQLLLPVQSKYVAVRGVEDGWKVINKMQVRGAPAIAIVGCLSLAVEIYPEEFESKKSLRQEIEGKLNYLVSARPTAVNMKIAADELLSLANDLTKAEDVSVPDMKQRFLNATEAMLQKDIADNRAIGANGAQAILKRVATTLGAAGTSGNGSVRVLTHCNTGSLATAGYGTALGVIRNLHELGKLEHVYCTETRPYNQGARLTAYELVHEKFPATLVLDSMVAALLRAKNVAAVVVGADRVAANGDTANKIGTYQIAVVAKHHGVPFYVAAPLTSIDLQIPSGDHIIIEERPDREMTHVGEHRIAAPGINCWNPAFDVTPASLITGIITERGVFEPQELKEAITKLLGL.

Residue Asp-255 is the Proton donor of the active site.

This sequence belongs to the eIF-2B alpha/beta/delta subunits family. MtnA subfamily.

Its subcellular location is the cytoplasm. It is found in the nucleus. It catalyses the reaction 5-(methylsulfanyl)-alpha-D-ribose 1-phosphate = 5-(methylsulfanyl)-D-ribulose 1-phosphate. It participates in amino-acid biosynthesis; L-methionine biosynthesis via salvage pathway; L-methionine from S-methyl-5-thio-alpha-D-ribose 1-phosphate: step 1/6. In terms of biological role, catalyzes the interconversion of methylthioribose-1-phosphate (MTR-1-P) into methylthioribulose-1-phosphate (MTRu-1-P). This Drosophila willistoni (Fruit fly) protein is Methylthioribose-1-phosphate isomerase.